A 437-amino-acid polypeptide reads, in one-letter code: Serine carboxypeptidase-like 7 (437 aa).

An N-terminal signal peptide occupies residues 1 to 25 (MANDYVSTVLLLLSLLIFLSQRTDS). Disulfide bonds link Cys84–Cys327, Cys248–Cys262, and Cys286–Cys293. An N-linked (GlcNAc...) asparagine glycan is attached at Asn105. Ser180 is a catalytic residue. The N-linked (GlcNAc...) asparagine glycan is linked to Asn346. The active site involves Asp362. Asn378 carries N-linked (GlcNAc...) asparagine glycosylation. His415 is an active-site residue.

Belongs to the peptidase S10 family. In terms of tissue distribution, ubiquitous.

The protein localises to the secreted. Functionally, probable carboxypeptidase. The polypeptide is Serine carboxypeptidase-like 7 (SCPL7) (Arabidopsis thaliana (Mouse-ear cress)).